A 269-amino-acid polypeptide reads, in one-letter code: Formamidopyrimidine-DNA glycosylase (269 aa).

Catalysis depends on P2, which acts as the Schiff-base intermediate with DNA. E3 acts as the Proton donor in catalysis. The active-site Proton donor; for beta-elimination activity is the K57. Positions 90, 109, and 150 each coordinate DNA. The FPG-type zinc finger occupies 235–269 (QVYGRKGEPCRVCGTPIVATKHAQRATFYCRQCQK). R259 (proton donor; for delta-elimination activity) is an active-site residue.

The protein belongs to the FPG family. Monomer. Zn(2+) is required as a cofactor.

It carries out the reaction Hydrolysis of DNA containing ring-opened 7-methylguanine residues, releasing 2,6-diamino-4-hydroxy-5-(N-methyl)formamidopyrimidine.. The enzyme catalyses 2'-deoxyribonucleotide-(2'-deoxyribose 5'-phosphate)-2'-deoxyribonucleotide-DNA = a 3'-end 2'-deoxyribonucleotide-(2,3-dehydro-2,3-deoxyribose 5'-phosphate)-DNA + a 5'-end 5'-phospho-2'-deoxyribonucleoside-DNA + H(+). In terms of biological role, involved in base excision repair of DNA damaged by oxidation or by mutagenic agents. Acts as a DNA glycosylase that recognizes and removes damaged bases. Has a preference for oxidized purines, such as 7,8-dihydro-8-oxoguanine (8-oxoG). Has AP (apurinic/apyrimidinic) lyase activity and introduces nicks in the DNA strand. Cleaves the DNA backbone by beta-delta elimination to generate a single-strand break at the site of the removed base with both 3'- and 5'-phosphates. This is Formamidopyrimidine-DNA glycosylase from Escherichia coli (strain K12 / MC4100 / BW2952).